Reading from the N-terminus, the 463-residue chain is Serine carboxypeptidase-like 32 (463 aa).

Positions 1–22 are cleaved as a signal peptide; the sequence is MMNISNVSIALYLCTLFAFVSS. Intrachain disulfides connect Cys86–Cys345, Cys249–Cys262, and Cys286–Cys313. N-linked (GlcNAc...) asparagine glycosylation is present at Asn137. Ser179 is an active-site residue. 2 N-linked (GlcNAc...) asparagine glycosylation sites follow: Asn201 and Asn250. 2 N-linked (GlcNAc...) asparagine glycosylation sites follow: Asn341 and Asn354. Catalysis depends on residues Asp384 and His436.

The protein belongs to the peptidase S10 family. In terms of tissue distribution, expressed in flowers.

The protein resides in the secreted. Its function is as follows. Probable carboxypeptidase. This Arabidopsis thaliana (Mouse-ear cress) protein is Serine carboxypeptidase-like 32 (SCPL32).